The primary structure comprises 25 residues: Small ribosomal subunit protein eS32 (25 aa).

The segment at 1–25 (MRDKWRKKRVRRLKRKRRKVRARSK) is disordered.

It belongs to the eukaryotic ribosomal protein eS32 family. Component of the small ribosomal subunit. Mature ribosomes consist of a small (40S) and a large (60S) subunit. The 40S subunit contains about 32 different proteins and 1 molecule of RNA (18S). The 60S subunit contains 45 different proteins and 3 molecules of RNA (25S, 5.8S and 5S).

It localises to the cytoplasm. Its function is as follows. Component of the ribosome, a large ribonucleoprotein complex responsible for the synthesis of proteins in the cell. The small ribosomal subunit (SSU) binds messenger RNAs (mRNAs) and translates the encoded message by selecting cognate aminoacyl-transfer RNA (tRNA) molecules. The large subunit (LSU) contains the ribosomal catalytic site termed the peptidyl transferase center (PTC), which catalyzes the formation of peptide bonds, thereby polymerizing the amino acids delivered by tRNAs into a polypeptide chain. The nascent polypeptides leave the ribosome through a tunnel in the LSU and interact with protein factors that function in enzymatic processing, targeting, and the membrane insertion of nascent chains at the exit of the ribosomal tunnel. The protein is Small ribosomal subunit protein eS32 of Candida albicans (strain SC5314 / ATCC MYA-2876) (Yeast).